The following is a 202-amino-acid chain: Complement component C8 gamma chain (202 aa).

Positions 1-23 (MVLRGRAVLLAVLLAAGSLGRWA) are cleaved as a signal peptide. Cysteines 96 and 188 form a disulfide. N-linked (GlcNAc...) asparagine glycosylation occurs at N173.

Belongs to the calycin superfamily. Lipocalin family. In terms of assembly, heterotrimer of 3 chains: alpha (C8A), beta (C8B) and gamma (C8G); the alpha and gamma chains are disulfide bonded. Component of the membrane attack complex (MAC), composed of complement C5b, C6, C7, C8A, C8B, C8G and multiple copies of the pore-forming subunit C9.

It is found in the secreted. The protein localises to the target cell membrane. Its activity is regulated as follows. Membrane attack complex (MAC) assembly is inhibited by CD59, thereby protecting self-cells from damage during complement activation. MAC assembly is also inhibited by clusterin (CLU) chaperones that inhibit polymerization of C9. Functionally, component of the membrane attack complex (MAC), a multiprotein complex activated by the complement cascade, which inserts into a target cell membrane and forms a pore, leading to target cell membrane rupture and cell lysis. The MAC is initiated by proteolytic cleavage of C5 into complement C5b in response to the classical, alternative, lectin and GZMK complement pathways. The complement pathways consist in a cascade of proteins that leads to phagocytosis and breakdown of pathogens and signaling that strengthens the adaptive immune system. C8G, together with C8A and C8B, inserts into the target membrane, but does not form pores by itself. During MAC assembly, associates with C5b, C6 and C7 to form the C5b8 intermediate complex that inserts into the target membrane and traverses the bilayer increasing membrane rigidity. This Oryctolagus cuniculus (Rabbit) protein is Complement component C8 gamma chain (C8G).